Here is a 409-residue protein sequence, read N- to C-terminus: Elongation factor Tu, cyanelle (409 aa).

One can recognise a tr-type G domain in the interval 10-214 (KPHVNIGTIG…AVDEYIPTPE (205 aa)). Positions 19 to 26 (GHVDHGKT) are G1. 19–26 (GHVDHGKT) contacts GTP. Threonine 26 provides a ligand contact to Mg(2+). The tract at residues 60–64 (GITIN) is G2. The segment at 81–84 (DCPG) is G3. Residues 81 to 85 (DCPGH) and 136 to 139 (NKED) contribute to the GTP site. The segment at 136–139 (NKED) is G4. The segment at 174–176 (SAL) is G5.

The protein belongs to the TRAFAC class translation factor GTPase superfamily. Classic translation factor GTPase family. EF-Tu/EF-1A subfamily.

It localises to the plastid. The protein resides in the cyanelle. The enzyme catalyses GTP + H2O = GDP + phosphate + H(+). In terms of biological role, GTP hydrolase that promotes the GTP-dependent binding of aminoacyl-tRNA to the A-site of ribosomes during protein biosynthesis. The chain is Elongation factor Tu, cyanelle (tufA) from Cyanophora paradoxa.